A 541-amino-acid polypeptide reads, in one-letter code: Carboxypeptidase Y homolog A (541 aa).

A signal peptide spans 1–17; sequence MKLLMTGLLASAAVAAA. The propeptide occupies 18–122; sequence QEQQVLQAEG…KLQSYDLRVK (105 aa). 5 disulfide bridges follow: C177–C417, C311–C325, C335–C358, C342–C351, and C380–C387. N208 is a glycosylation site (N-linked (GlcNAc...) asparagine). S264 is an active-site residue. D456 is an active-site residue. An N-linked (GlcNAc...) asparagine glycan is attached at N507. Residue H518 is part of the active site.

The protein belongs to the peptidase S10 family.

It is found in the vacuole. It catalyses the reaction Release of a C-terminal amino acid with broad specificity.. Its function is as follows. Vacuolar carboxypeptidase involved in degradation of small peptides. Digests preferentially peptides containing an aliphatic or hydrophobic residue in P1' position, as well as methionine, leucine or phenylalanine in P1 position of ester substrate. This is Carboxypeptidase Y homolog A (CPYA) from Arthroderma otae (strain ATCC MYA-4605 / CBS 113480) (Microsporum canis).